A 421-amino-acid polypeptide reads, in one-letter code: Serine--tRNA ligase (421 aa).

Position 229-231 (229-231) interacts with L-serine; sequence TAE. Residue 260-262 participates in ATP binding; that stretch reads RAE. Residue Glu-283 coordinates L-serine. 347–350 contributes to the ATP binding site; that stretch reads EISS. Ser-383 contributes to the L-serine binding site.

It belongs to the class-II aminoacyl-tRNA synthetase family. Type-1 seryl-tRNA synthetase subfamily. Homodimer. The tRNA molecule binds across the dimer.

It localises to the cytoplasm. It catalyses the reaction tRNA(Ser) + L-serine + ATP = L-seryl-tRNA(Ser) + AMP + diphosphate + H(+). The catalysed reaction is tRNA(Sec) + L-serine + ATP = L-seryl-tRNA(Sec) + AMP + diphosphate + H(+). Its pathway is aminoacyl-tRNA biosynthesis; selenocysteinyl-tRNA(Sec) biosynthesis; L-seryl-tRNA(Sec) from L-serine and tRNA(Sec): step 1/1. Functionally, catalyzes the attachment of serine to tRNA(Ser). Is also able to aminoacylate tRNA(Sec) with serine, to form the misacylated tRNA L-seryl-tRNA(Sec), which will be further converted into selenocysteinyl-tRNA(Sec). The sequence is that of Serine--tRNA ligase from Desulfitobacterium hafniense (strain Y51).